The following is a 447-amino-acid chain: Cysteine--tRNA ligase (447 aa).

Cys-28 contacts Zn(2+). The 'HIGH' region motif lies at 30–40 (PTVYNYIHIGN). Zn(2+) contacts are provided by Cys-211, His-236, and Glu-240. The 'KMSKS' region signature appears at 268-272 (KMSKS). ATP is bound at residue Lys-271.

This sequence belongs to the class-I aminoacyl-tRNA synthetase family. In terms of assembly, monomer. The cofactor is Zn(2+).

Its subcellular location is the cytoplasm. The catalysed reaction is tRNA(Cys) + L-cysteine + ATP = L-cysteinyl-tRNA(Cys) + AMP + diphosphate. This chain is Cysteine--tRNA ligase, found in Streptococcus agalactiae serotype Ia (strain ATCC 27591 / A909 / CDC SS700).